Consider the following 604-residue polypeptide: Uptake hydrogenase large subunit (604 aa).

Ni(2+) is bound by residues cysteine 76, cysteine 79, cysteine 583, and cysteine 586.

This sequence belongs to the [NiFe]/[NiFeSe] hydrogenase large subunit family. As to quaternary structure, heterodimer of a large and a small subunit. Requires Ni(2+) as cofactor.

It is found in the cell membrane. The catalysed reaction is H2 + A = AH2. Its function is as follows. This enzyme recycles the H(2) produced by nitrogenase to increase the production of ATP and to protect nitrogenase against inhibition or damage by O(2) under carbon- or phosphate-limited conditions. The polypeptide is Uptake hydrogenase large subunit (hoxL) (Afipia carboxidovorans (strain ATCC 49405 / DSM 1227 / KCTC 32145 / OM5) (Oligotropha carboxidovorans)).